The sequence spans 485 residues: NADH-quinone oxidoreductase subunit N (485 aa).

14 helical membrane-spanning segments follow: residues 10–30, 35–55, 75–95, 104–124, 125–145, 159–179, 203–223, 235–255, 271–291, 297–317, 327–347, 374–394, 408–427, and 449–469; these read AMLPLLIVGLTVVVVMLSIAW, FINATLTVIGLNLALLSLYFV, FYIGLVIVASLATSTFAYPWL, EFYLLVLIATMGGILLASANH, LASLFLGIELISLPLFGLIGY, YMLLSAAASSFLLFGMALLYA, ILAGLGMMIVGLGFKLSLVPF, PAPVSTFLATASKIAIFAVVM, LVLSLIAVASILFGNLMAISQ, LLGYSSIAHLGYLLIALVAVQ, GVYLAGYLFSSLGAFGVVSLM, AVMTVMMLSLAGIPMTLGFIG, WWLTGAVVLGSAIGLYYYLR, and ALTAGGVVVLISAILVLVLGI.

This sequence belongs to the complex I subunit 2 family. As to quaternary structure, NDH-1 is composed of 13 different subunits. Subunits NuoA, H, J, K, L, M, N constitute the membrane sector of the complex.

The protein localises to the cell inner membrane. The catalysed reaction is a quinone + NADH + 5 H(+)(in) = a quinol + NAD(+) + 4 H(+)(out). Functionally, NDH-1 shuttles electrons from NADH, via FMN and iron-sulfur (Fe-S) centers, to quinones in the respiratory chain. The immediate electron acceptor for the enzyme in this species is believed to be ubiquinone. Couples the redox reaction to proton translocation (for every two electrons transferred, four hydrogen ions are translocated across the cytoplasmic membrane), and thus conserves the redox energy in a proton gradient. This is NADH-quinone oxidoreductase subunit N from Yersinia enterocolitica serotype O:8 / biotype 1B (strain NCTC 13174 / 8081).